Reading from the N-terminus, the 208-residue chain is Uracil phosphoribosyltransferase (208 aa).

Residues Arg-78, Arg-103, and 130–138 (DPMLATGGS) contribute to the 5-phospho-alpha-D-ribose 1-diphosphate site. Residues Ile-193 and 198-200 (GDA) each bind uracil. Asp-199 provides a ligand contact to 5-phospho-alpha-D-ribose 1-diphosphate.

Belongs to the UPRTase family. Mg(2+) serves as cofactor.

It carries out the reaction UMP + diphosphate = 5-phospho-alpha-D-ribose 1-diphosphate + uracil. It functions in the pathway pyrimidine metabolism; UMP biosynthesis via salvage pathway; UMP from uracil: step 1/1. With respect to regulation, allosterically activated by GTP. In terms of biological role, catalyzes the conversion of uracil and 5-phospho-alpha-D-ribose 1-diphosphate (PRPP) to UMP and diphosphate. This chain is Uracil phosphoribosyltransferase, found in Shewanella amazonensis (strain ATCC BAA-1098 / SB2B).